Reading from the N-terminus, the 306-residue chain is tRNA dimethylallyltransferase (306 aa).

9 to 16 serves as a coordination point for ATP; it reads GPTAVGKT. 11-16 contacts substrate; sequence TAVGKT. An interaction with substrate tRNA region spans residues 34 to 37; sequence DSRQ.

It belongs to the IPP transferase family. In terms of assembly, monomer. Mg(2+) serves as cofactor.

It catalyses the reaction adenosine(37) in tRNA + dimethylallyl diphosphate = N(6)-dimethylallyladenosine(37) in tRNA + diphosphate. Its function is as follows. Catalyzes the transfer of a dimethylallyl group onto the adenine at position 37 in tRNAs that read codons beginning with uridine, leading to the formation of N6-(dimethylallyl)adenosine (i(6)A). This chain is tRNA dimethylallyltransferase, found in Roseiflexus castenholzii (strain DSM 13941 / HLO8).